The primary structure comprises 200 residues: Adenylyl-sulfate kinase (200 aa).

ATP is bound at residue 35-42 (GLPASGKS). Residue Ser-109 is the Phosphoserine intermediate of the active site.

Belongs to the APS kinase family.

The enzyme catalyses adenosine 5'-phosphosulfate + ATP = 3'-phosphoadenylyl sulfate + ADP + H(+). Its pathway is sulfur metabolism; hydrogen sulfide biosynthesis; sulfite from sulfate: step 2/3. Functionally, catalyzes the synthesis of activated sulfate. This is Adenylyl-sulfate kinase from Thermodesulfovibrio yellowstonii (strain ATCC 51303 / DSM 11347 / YP87).